The chain runs to 209 residues: dTTP/UTP pyrophosphatase (209 aa).

The active-site Proton acceptor is D79.

It belongs to the Maf family. YhdE subfamily. A divalent metal cation serves as cofactor.

It localises to the cytoplasm. The catalysed reaction is dTTP + H2O = dTMP + diphosphate + H(+). It catalyses the reaction UTP + H2O = UMP + diphosphate + H(+). Functionally, nucleoside triphosphate pyrophosphatase that hydrolyzes dTTP and UTP. May have a dual role in cell division arrest and in preventing the incorporation of modified nucleotides into cellular nucleic acids. This chain is dTTP/UTP pyrophosphatase, found in Bradyrhizobium diazoefficiens (strain JCM 10833 / BCRC 13528 / IAM 13628 / NBRC 14792 / USDA 110).